The following is a 308-amino-acid chain: GMP synthase [glutamine-hydrolyzing] subunit B (308 aa).

The 185-residue stretch at 1–185 (MDWGRFVEEK…LGLPEKIYNR (185 aa)) folds into the GMPS ATP-PPase domain. ATP is bound at residue 28–34 (SGGVDSS).

As to quaternary structure, heterodimer composed of a glutamine amidotransferase subunit (A) and a GMP-binding subunit (B).

The catalysed reaction is XMP + L-glutamine + ATP + H2O = GMP + L-glutamate + AMP + diphosphate + 2 H(+). The protein operates within purine metabolism; GMP biosynthesis; GMP from XMP (L-Gln route): step 1/1. Functionally, catalyzes the synthesis of GMP from XMP. The polypeptide is GMP synthase [glutamine-hydrolyzing] subunit B (guaAB) (Pyrococcus horikoshii (strain ATCC 700860 / DSM 12428 / JCM 9974 / NBRC 100139 / OT-3)).